A 161-amino-acid chain; its full sequence is Phosphopantetheine adenylyltransferase (161 aa).

Serine 8 serves as a coordination point for substrate. ATP is bound by residues 8-9 and histidine 16; that span reads SF. Positions 40, 72, and 86 each coordinate substrate. ATP-binding positions include 87–89, glutamate 97, and 122–128; these read GLR and FSFVSSS.

The protein belongs to the bacterial CoaD family. Homohexamer. Requires Mg(2+) as cofactor.

The protein localises to the cytoplasm. It carries out the reaction (R)-4'-phosphopantetheine + ATP + H(+) = 3'-dephospho-CoA + diphosphate. It participates in cofactor biosynthesis; coenzyme A biosynthesis; CoA from (R)-pantothenate: step 4/5. Its function is as follows. Reversibly transfers an adenylyl group from ATP to 4'-phosphopantetheine, yielding dephospho-CoA (dPCoA) and pyrophosphate. This is Phosphopantetheine adenylyltransferase from Thermotoga neapolitana (strain ATCC 49049 / DSM 4359 / NBRC 107923 / NS-E).